The chain runs to 95 residues: Large ribosomal subunit protein bL21 (95 aa).

It belongs to the bacterial ribosomal protein bL21 family. As to quaternary structure, part of the 50S ribosomal subunit. Contacts protein L20.

This protein binds to 23S rRNA in the presence of protein L20. This is Large ribosomal subunit protein bL21 from Chlorobaculum tepidum (strain ATCC 49652 / DSM 12025 / NBRC 103806 / TLS) (Chlorobium tepidum).